A 120-amino-acid chain; its full sequence is NAD(P)H-quinone oxidoreductase subunit 3 (120 aa).

3 helical membrane-spanning segments follow: residues 11-31 (LIFL…SYLI), 64-84 (MFAL…PWAV), and 89-109 (LGLL…VALV).

It belongs to the complex I subunit 3 family. NDH-1 can be composed of about 15 different subunits; different subcomplexes with different compositions have been identified which probably have different functions.

It localises to the cell inner membrane. The enzyme catalyses a plastoquinone + NADH + (n+1) H(+)(in) = a plastoquinol + NAD(+) + n H(+)(out). It catalyses the reaction a plastoquinone + NADPH + (n+1) H(+)(in) = a plastoquinol + NADP(+) + n H(+)(out). In terms of biological role, NDH-1 shuttles electrons from an unknown electron donor, via FMN and iron-sulfur (Fe-S) centers, to quinones in the respiratory and/or the photosynthetic chain. The immediate electron acceptor for the enzyme in this species is believed to be plastoquinone. Couples the redox reaction to proton translocation, and thus conserves the redox energy in a proton gradient. Cyanobacterial NDH-1 also plays a role in inorganic carbon-concentration. In Gloeobacter violaceus (strain ATCC 29082 / PCC 7421), this protein is NAD(P)H-quinone oxidoreductase subunit 3.